Consider the following 150-residue polypeptide: Large ribosomal subunit protein uL22c (150 aa).

This sequence belongs to the universal ribosomal protein uL22 family. As to quaternary structure, part of the 50S ribosomal subunit.

The protein resides in the plastid. It localises to the chloroplast. Functionally, this protein binds specifically to 23S rRNA. The globular domain of the protein is located near the polypeptide exit tunnel on the outside of the subunit, while an extended beta-hairpin is found that lines the wall of the exit tunnel in the center of the 70S ribosome. This chain is Large ribosomal subunit protein uL22c (rpl22), found in Fagopyrum esculentum subsp. ancestrale (Wild buckwheat).